A 689-amino-acid chain; its full sequence is Glycine--tRNA ligase beta subunit (689 aa).

The protein belongs to the class-II aminoacyl-tRNA synthetase family. As to quaternary structure, tetramer of two alpha and two beta subunits.

Its subcellular location is the cytoplasm. The enzyme catalyses tRNA(Gly) + glycine + ATP = glycyl-tRNA(Gly) + AMP + diphosphate. The chain is Glycine--tRNA ligase beta subunit from Shewanella halifaxensis (strain HAW-EB4).